The following is an 880-amino-acid chain: MQPTDPNKFTDKAWEVIVKSQDIVRAYQQQQLDVEHLILALIEDPTSLAVRILGRAEIDPIRLQQQLEAFTQRQTKVGKSDQLYLGRSLDVMLDRAEEIRERMKDGYISVEHMLLAFVDDERVGRKVLKGFNVDSAKIEASIKAVRGSQKVTDQNPESRYEALQKFGRDLTEQAKSGKLDPVIGRDDEIRRVIQVLSRRSKNNPVLIGEPGVGKTAIAEALAQRIVNGDVPESLKNRQLISLDIGSLIAGAKYRGEFEDRLKAVLREVTESNGNIVLFIDELHTVVGTGSNQQGAMDAGNLLKPMLARGELRCIGATTLDEFRKFIEKDAALERRFQQVYVDQPSVENTISILRGLKERYEVHHNVKISDSALVAAATLSARYIADRFLPDKAIDLVDEAAAQLKMEITSKPADLEAIDRRLMQLEMEKLSLAGEEKVAAPTKERLQRIELEITNLTEKQQDLNNQWQGEKQVLEAISLLKKEEDALRVQIEQAERAYDLNKAAQLKYGKLEGVQRDREAKEAKLLELQSQGSTLLREQVTEADIAEIVAKWTGIPVNRLLESERQKLLQLESHLHQRVIGQQEAVEAVSAAIRRARAGMKDPNRPIGSFLFMGPTGVGKTELARALAQFLFDADDALVRLDMSEYMEKHSVSRLVGAPPGYVGYEEGGQLSEAVRRHPYSVVLLDEVEKAHPDVFNILLQVLDDGRITDSQGRTVDFRNTVIVMTSNIGSEHILDVSGDDTQYETMRNRVMDALRSHFRPEFLNRVDDTILFHALSRSEMSHIIRIQLKRVESLLRDQKISFEISPAACDFLVEKGYDPVYGARPLKRAIQREIENPLATKILENTFISGDTIYIDQDENGLSFTNKAPVKVSVTQITT.

The Clp R domain maps to 6–148 (PNKFTDKAWE…EASIKAVRGS (143 aa)). 2 repeat regions span residues 9-74 (FTDK…TQRQ) and 85-148 (LGRS…VRGS). Positions 161 to 343 (EALQKFGRDL…RRFQQVYVDQ (183 aa)) are NBD1. 208 to 215 (GEPGVGKT) is an ATP binding site. The linker stretch occupies residues 344–554 (PSVENTISIL…IAEIVAKWTG (211 aa)). Residues 394–530 (IDLVDEAAAQ…KEAKLLELQS (137 aa)) adopt a coiled-coil conformation. The segment at 564 to 775 (ERQKLLQLES…RVDDTILFHA (212 aa)) is NBD2. 614–621 (GPTGVGKT) lines the ATP pocket. The interval 776 to 880 (LSRSEMSHII…VKVSVTQITT (105 aa)) is C-terminal.

The protein belongs to the ClpA/ClpB family. As to quaternary structure, homohexamer. The oligomerization is ATP-dependent.

The protein localises to the cytoplasm. Part of a stress-induced multi-chaperone system, it is involved in the recovery of the cell from heat-induced damage, in cooperation with DnaK, DnaJ and GrpE. Acts before DnaK, in the processing of protein aggregates. Protein binding stimulates the ATPase activity; ATP hydrolysis unfolds the denatured protein aggregates, which probably helps expose new hydrophobic binding sites on the surface of ClpB-bound aggregates, contributing to the solubilization and refolding of denatured protein aggregates by DnaK. In Nostoc sp. (strain PCC 7120 / SAG 25.82 / UTEX 2576), this protein is Chaperone protein ClpB 1 (clpB1).